The chain runs to 276 residues: Secretagogin (276 aa).

EF-hand domains follow at residues Leu-12–Lys-47, Asn-58–Asn-93, Asp-105–His-140, Glu-149–Phe-184, Glu-197–Leu-232, and Val-240–Pro-276. 25 residues coordinate Ca(2+): Asp-25, Tyr-31, Glu-36, Ser-73, Glu-75, Arg-77, Glu-82, Asp-118, Asp-120, Ser-122, Glu-129, Asp-162, Asn-164, Asp-166, Arg-168, Asp-173, Asp-210, Ser-212, Thr-214, Glu-221, Asp-254, Asn-256, Asp-258, Lys-260, and Glu-265.

It is found in the cytoplasm. It localises to the secreted. Its subcellular location is the cytoplasmic vesicle. The protein resides in the secretory vesicle membrane. The sequence is that of Secretagogin (Scgn) from Mus musculus (Mouse).